A 238-amino-acid chain; its full sequence is Serine protease SplA (238 aa).

The first 38 residues, 1–38 (MNKNVMVKGLTALTILTILTSLGFAENISNQPHSIAKA), serve as a signal peptide directing secretion. Catalysis depends on charge relay system residues H77, D116, and S192.

It belongs to the peptidase S1B family.

The protein localises to the secreted. The protein is Serine protease SplA (splA) of Staphylococcus aureus (strain COL).